Reading from the N-terminus, the 350-residue chain is MTAVETVLGSITPNLLGRTLTHEHVALDFEHFYRPPPADFESELKAKISMSTLGYVRLYPYSSKENVRFYDEEALEAAKKDVLLYKKHGGGSIVENSSYGLKRNLEFIVELAKSTGVHFIAGTGHYIHAVQDASHASLTVEQMSDLYTKDILTGIEIKGKMVKCGFIGEVASVYPIHEFEKNSIKATGEIQEVLGCGVSFHPHRDAQAPFDIMRLYLEAGGRAQKCVMSHLDRTLFKIEELVELSELGCYLQYDLFGTECSYYQLNTNVDMISDGQRIENLMKLIEEGLLDRLLMSHDIHTKHRLTSYGGHGYHHIHTNILPRMFARGVTLEQVEQMTVTNPANWLSFDP.

A divalent metal cation contacts are provided by His-22, His-24, Glu-169, His-201, His-230, and Asp-298.

The protein belongs to the metallo-dependent hydrolases superfamily. Phosphotriesterase family. Requires a divalent metal cation as cofactor.

This is Phosphotriesterase-related protein from Drosophila pseudoobscura pseudoobscura (Fruit fly).